Here is a 388-residue protein sequence, read N- to C-terminus: Cystathionine gamma-synthase (388 aa).

Positions 1–24 (MSEDRTGHQGISGPATRAIHAGYR) are disordered. N6-(pyridoxal phosphate)lysine is present on Lys208.

The protein belongs to the trans-sulfuration enzymes family. In terms of assembly, homotetramer. The cofactor is pyridoxal 5'-phosphate.

The protein resides in the cytoplasm. The enzyme catalyses O-succinyl-L-homoserine + L-cysteine = L,L-cystathionine + succinate + H(+). Functionally, catalyzes the formation of L-cystathionine from O-succinyl-L-homoserine (OSHS) and L-cysteine, via a gamma-replacement reaction. In the absence of thiol, catalyzes gamma-elimination to form 2-oxobutanoate, succinate and ammonia. The chain is Cystathionine gamma-synthase (metB) from Mycobacterium bovis (strain ATCC BAA-935 / AF2122/97).